The sequence spans 138 residues: MLTPFNNFFQQRQNYHSSVIDHFENPRNVGSYDKSANDVGTGLVGAPACGDVMKLQIKVENDIIKDAKFRTFGCGSAIASSSLATEWIKGKSISDSLKITNKDIAKKLSLPPVKLHCSMLAEDAIKAAISDYQKKNGL.

This sequence belongs to the NifU family. Component of the core Fe-S cluster (ISC) assembly machinery. The cofactor is [2Fe-2S] cluster.

The protein localises to the cytoplasm. It participates in cofactor biosynthesis; iron-sulfur cluster biosynthesis. Functionally, scaffold protein for the de novo synthesis of iron-sulfur (Fe-S) clusters within mitosomes, which is required for maturation of both [2Fe-2S] and [4Fe-4S] proteins. First, a [2Fe-2S] cluster is transiently assembled on the scaffold protein ISU1. In a second step, the cluster is released from ISU1, transferred to a glutaredoxin, followed by the formation of [2Fe-2S] proteins, the synthesis of [4Fe-4S] clusters and their target-specific insertion into the recipient apoproteins. Cluster assembly on ISU1 depends on the function of the cysteine desulfurase complex NFS1-ISD11, which serves as the sulfur donor for cluster synthesis, the iron-binding protein frataxin as the putative iron donor, and the electron transfer chain comprised of ferredoxin reductase and ferredoxin, which receive their electrons from NADH. The polypeptide is Iron sulfur cluster assembly protein 1 (ISU1) (Trachipleistophora hominis (Microsporidian parasite)).